Here is a 107-residue protein sequence, read N- to C-terminus: MEDGVQAMRDYLAGLDIASPEHQVLMNVTAKSEVAPSIIKENLSLHLTHTVKWTESLDTFLNMPTPVAFLEISNKPYLGNMLNDFAGVDQQRVMHCRKAFSDAKVFK.

This is an uncharacterized protein from Escherichia coli (strain K12).